A 26-amino-acid polypeptide reads, in one-letter code: VGTALGSLAEELNGYNRKKGGFSFRF.

Phenylalanine amide is present on phenylalanine 26.

As to expression, brain.

The protein localises to the secreted. Functionally, may have orexigenic activity. May promote aldosterone secretion by the adrenal gland. This is Orexigenic neuropeptide 26RFa from Pelophylax lessonae (Pool frog).